Consider the following 296-residue polypeptide: Putative methyltransferase HI_1523 (296 aa).

This sequence belongs to the N(4)/N(6)-methyltransferase family.

The protein is Putative methyltransferase HI_1523 of Haemophilus influenzae (strain ATCC 51907 / DSM 11121 / KW20 / Rd).